A 145-amino-acid polypeptide reads, in one-letter code: 3-dehydroquinate dehydratase (145 aa).

Tyr-23 serves as the catalytic Proton acceptor. 3 residues coordinate substrate: Asn-75, His-81, and Asp-88. His-101 acts as the Proton donor in catalysis. Substrate is bound by residues 102-103 (IS) and Arg-112.

Belongs to the type-II 3-dehydroquinase family. In terms of assembly, homododecamer.

The enzyme catalyses 3-dehydroquinate = 3-dehydroshikimate + H2O. The protein operates within metabolic intermediate biosynthesis; chorismate biosynthesis; chorismate from D-erythrose 4-phosphate and phosphoenolpyruvate: step 3/7. Its function is as follows. Catalyzes a trans-dehydration via an enolate intermediate. This Caldicellulosiruptor saccharolyticus (strain ATCC 43494 / DSM 8903 / Tp8T 6331) protein is 3-dehydroquinate dehydratase.